Reading from the N-terminus, the 469-residue chain is Small ribosomal subunit protein mS29 (469 aa).

Leu150 contributes to the ATP binding site.

It belongs to the mitochondrion-specific ribosomal protein mS29 family. Component of the mitochondrial small ribosomal subunit (mt-SSU). Mature N.crassa 74S mitochondrial ribosomes consist of a small (37S) and a large (54S) subunit. The 37S small subunit contains a 16S ribosomal RNA (16S mt-rRNA) and 32 different proteins. The 54S large subunit contains a 23S rRNA (23S mt-rRNA) and 42 different proteins.

Its subcellular location is the mitochondrion. Its function is as follows. Component of the mitochondrial ribosome (mitoribosome), a dedicated translation machinery responsible for the synthesis of mitochondrial genome-encoded proteins, including at least some of the essential transmembrane subunits of the mitochondrial respiratory chain. The mitoribosomes are attached to the mitochondrial inner membrane and translation products are cotranslationally integrated into the membrane. The sequence is that of Small ribosomal subunit protein mS29 (rsm23) from Neurospora crassa (strain ATCC 24698 / 74-OR23-1A / CBS 708.71 / DSM 1257 / FGSC 987).